The chain runs to 1064 residues: Error-prone DNA polymerase (1064 aa).

The protein belongs to the DNA polymerase type-C family. DnaE2 subfamily.

The protein localises to the cytoplasm. It carries out the reaction DNA(n) + a 2'-deoxyribonucleoside 5'-triphosphate = DNA(n+1) + diphosphate. Functionally, DNA polymerase involved in damage-induced mutagenesis and translesion synthesis (TLS). It is not the major replicative DNA polymerase. The chain is Error-prone DNA polymerase from Azoarcus sp. (strain BH72).